The following is a 463-amino-acid chain: Nitrate/nitrite antiporter NarK (463 aa).

Residues 1–37 (MSHSSAPERATGAVITDWRPEDPAFWQQRGQRIASRN) are Cytoplasmic-facing. A helical transmembrane segment spans residues 38–59 (LWISVPCLLLAFCVWMLFSAVA). Topologically, residues 60-73 (VNLPKVGFNFTTDQ) are periplasmic. A helical transmembrane segment spans residues 74–95 (LFMLTALPSVSGALLRVPYSFM). R89 contributes to the nitrate binding site. R89 contacts nitrite. Over 96 to 102 (VPIFGGR) the chain is Cytoplasmic. Residues 103-122 (RWTAFSTGILIIPCVWLGFA) traverse the membrane as a helical segment. The Periplasmic portion of the chain corresponds to 123-130 (VQDTSTPY). The helical transmembrane segment at 131-151 (SVFIIISLLCGFAGANFASSM) threads the bilayer. Over 152 to 166 (ANISFFFPKQKQGGA) the chain is Cytoplasmic. A helical membrane pass occupies residues 167 to 189 (LGLNGGLGNMGVSVMQLVAPLVV). N175 provides a ligand contact to nitrate. Residues 190 to 211 (SLSIFAVFGSQGVKQPDGTELY) are Periplasmic-facing. The helical transmembrane segment at 212 to 233 (LANASWIWVPFLAIFTIAAWFG) threads the bilayer. Residues 234-253 (MNDLATSKASIKEQLPVLKR) are Cytoplasmic-facing. Residues 254 to 281 (GHLWIMSLLYLATFGSFIGFSAGFAMLS) traverse the membrane as a helical segment. Y263 contributes to the nitrate binding site. Y263 is a nitrite binding site. Residues 282–289 (KTQFPDVQ) are Periplasmic-facing. Residues 290 to 312 (ILQYAFFGPFIGALARSAGGALS) form a helical membrane-spanning segment. At 313–316 (DRLG) the chain is on the cytoplasmic side. A helical membrane pass occupies residues 317–338 (GTRVTLVNFILMAIFSGLLFLT). Residues 339 to 347 (LPTDGQGGS) lie on the Periplasmic side of the membrane. Residues 348 to 373 (FMAFFAVFLALFLTAGLGSGSTFQMI) traverse the membrane as a helical segment. Topologically, residues 374 to 405 (SVIFRKLTMDRVKAEGGSDERAMREAATDTAA) are cytoplasmic. The chain crosses the membrane as a helical span at residues 406-427 (ALGFISAIGAIGGFFIPKAFGS). Position 411 (S411) interacts with nitrate. Residues 428–435 (SLALTGSP) lie on the Periplasmic side of the membrane. A helical transmembrane segment spans residues 436–458 (VGAMKVFLIFYIACVVITWAVYG). Residues 459–463 (RHSKK) lie on the Cytoplasmic side of the membrane.

It belongs to the major facilitator superfamily. Nitrate/nitrite porter (TC 2.A.1.8) family.

It is found in the cell inner membrane. The enzyme catalyses nitrate(in) + nitrite(out) = nitrate(out) + nitrite(in). Its function is as follows. Catalyzes nitrate uptake, nitrite uptake and nitrite export across the cytoplasmic membrane. Functions as a nitrate/nitrite exchanger, and protons are unlikely to be co-transported. The polypeptide is Nitrate/nitrite antiporter NarK (Escherichia coli (strain K12)).